Consider the following 1026-residue polypeptide: Probable DNA-directed RNA polymerase II subunit RPB1 homolog (1026 aa).

Positions 62, 65, 72, 75, 102, 105, and 142 each coordinate Zn(2+). D588, D590, and D592 together coordinate Mg(2+).

Belongs to the RNA polymerase beta' chain family.

It catalyses the reaction RNA(n) + a ribonucleoside 5'-triphosphate = RNA(n+1) + diphosphate. Functionally, component of the DNA-dependent RNA polymerase that catalyzes the transcription of DNA into RNA using the four ribonucleoside triphosphates as substrates. Largest and catalytic component of RNA polymerase II which synthesizes mRNA precursors and many functional non-coding RNAs. Forms the polymerase active center together with the second largest subunit. The sequence is that of Probable DNA-directed RNA polymerase II subunit RPB1 homolog from Acheta domesticus (House cricket).